The following is a 372-amino-acid chain: UDP-2-acetamido-2,6-beta-L-arabino-hexul-4-ose reductase (372 aa).

NAD(+) contacts are provided by residues 7-30 (GANG…EVVP), Leu53, Tyr103, and Lys107. Tyr103 acts as the Proton acceptor in catalysis. Substrate contacts are provided by residues Asn132 and 279–282 (HPGV).

It belongs to the NAD(P)-dependent epimerase/dehydratase family. Homodimer.

The catalysed reaction is UDP-2-acetamido-2,6-dideoxy-beta-L-arabino-hex-4-ulose + NADH + H(+) = UDP-2-acetamido-2,6-dideoxy-beta-L-talose + NAD(+). It catalyses the reaction UDP-2-acetamido-2,6-dideoxy-beta-L-arabino-hex-4-ulose + NADPH + H(+) = UDP-2-acetamido-2,6-dideoxy-beta-L-talose + NADP(+). It functions in the pathway bacterial outer membrane biogenesis; LPS O-antigen biosynthesis. Bifunctional enzyme that mediates C-3 epimerization of the second intermediate followed by reduction at C-4 during serogroup O11 O-antigen biosynthesis, thus catalyzing the conversion of UDP-N-acetyl-D-glucosamine to precursors for the biosynthesis of O antigen. The sequence is that of UDP-2-acetamido-2,6-beta-L-arabino-hexul-4-ose reductase from Pseudomonas aeruginosa (strain ATCC 29260 / BCRC 12902 / CIP 102967 / NCIMB 11965 / PA103).